The chain runs to 501 residues: Splicing factor ESS-2 homolog (501 aa).

Low complexity-rich tracts occupy residues 1-18 and 105-115; these read MSAT…GTPG and ISGTGRSTSRR. 2 disordered regions span residues 1-20 and 105-163; these read MSAT…PGSL and ISGT…GRDT. The segment covering 126–151 has biased composition (polar residues); the sequence is TPVSQAKCSNTPLPNSRATDTPFSTD. A compositionally biased stretch (basic and acidic residues) spans 152–163; the sequence is GSEKSDAEGRDT. Phosphoserine occurs at positions 409 and 411. Residues 425–471 are disordered; the sequence is RGTPRLRHTPSPMSGRKRKVTPGVVRSTNTPILGEPKPKQQAKISTP.

The protein belongs to the ESS2 family.

Its subcellular location is the nucleus. The protein is Splicing factor ESS-2 homolog (Es2) of Drosophila melanogaster (Fruit fly).